The following is a 2554-amino-acid chain: Highly reducing polyketide synthase PKS6 (2554 aa).

The segment at 1-48 is disordered; sequence MGSLSAVPATNGNHAALNGSASTNGQHVNGSTHVNGNHSLNGSAQVNG. A compositionally biased stretch (polar residues) spans 8-48; that stretch reads PATNGNHAALNGSASTNGQHVNGSTHVNGNHSLNGSAQVNG. The 426-residue stretch at 56 to 481 folds into the Ketosynthase family 3 (KS3) domain; the sequence is LEPIAVVGMS…GTNAHVVVDA (426 aa). Catalysis depends on for beta-ketoacyl synthase activity residues Cys230, His367, and His407. The malonyl-CoA:ACP transacylase (MAT) domain stretch occupies residues 595 to 913; the sequence is VFSGQGAQYP…HYTGSLKRGE (319 aa). Residues 981–1119 form an N-terminal hotdog fold region; that stretch reads HELLGTLVHD…GLVQVILKSE (139 aa). A dehydratase (DH) domain region spans residues 981–1281; it reads HELLGTLVHD…QAWGVVATKL (301 aa). The PKS/mFAS DH domain occupies 981 to 1287; that stretch reads HELLGTLVHD…ATKLPDVSIG (307 aa). The active-site Proton acceptor; for dehydratase activity is His1013. The segment at 1137–1287 is C-terminal hotdog fold; the sequence is AQHIPANQFY…ATKLPDVSIG (151 aa). Asp1200 functions as the Proton donor; for dehydratase activity in the catalytic mechanism. A methyltransferase (CMet) domain region spans residues 1451-1556; that stretch reads VEVGAGTGSA…KTMLRPGGKL (106 aa). The segment at 1840–2153 is enoyl reductase (ER) domain; that stretch reads GVLDTIRWVD…AGKHTGKVIL (314 aa). A ketoreductase (KR) domain region spans residues 2177–2353; the sequence is ATYLVVGGLG…TAYAVNIGAI (177 aa). A Carrier domain is found at 2457–2534; the sequence is EAQDIICDAI…ELAEIVTKGS (78 aa). Ser2494 is subject to O-(pantetheine 4'-phosphoryl)serine.

Its pathway is secondary metabolite biosynthesis. Highly reducing polyketide synthase; part of the gene cluster that mediates the biosynthesis of the lipopeptide fusaristatin A. Fusaristatin A consists of a polyketide chain linked to three amino acid residues glutamine (Gln), dehydroalanine (dehydro-Ala), and beta-aminoisobutyric acid. The biosynthesis starts with formation of a linear polyketide chain by the highly reducing polyketide synthase PKS6. The gene cluster does not contain an acyl-CoA ligase or an acyl-transferase, and it is therefore predicted that the polyketide is transferred directly to the nonribosomal peptide synthetase NRPS7. Modules 1-3 from NRPS7 incorporate dehydro-Ala, Gln, and beta-aminoisobutyric acid in the compound, which is released by cyclization. The beta-aminoisobutyric acid units are most likely not freely available to the NRPS, but can be synthesized from thymine, which requires a dehydrogenase, a monooxygenase, and an aminotransferase. The fusaristatin A cluster contains a cytochrome P450 monooxygenase (FGSG_08207) and an aminotransferase (FGSG_17085), which theoretically can perform two of the enzymatic steps. The enzymes may however also be involved in biosynthesis of dehydroalanine or modification of the polyketide. The dehydro-Ala residue can be a result of cyclization, where serine is dehydrated. The last gene of the cluster encodes a protein with an A/B barrel domain found in variable enzymes, which hampers functional prediction. This chain is Highly reducing polyketide synthase PKS6, found in Gibberella zeae (strain ATCC MYA-4620 / CBS 123657 / FGSC 9075 / NRRL 31084 / PH-1) (Wheat head blight fungus).